We begin with the raw amino-acid sequence, 652 residues long: O-fucosyltransferase 15 (652 aa).

A helical; Signal-anchor for type II membrane protein membrane pass occupies residues 91-111; sequence TAAFVIVLVGFFIFVNWFMLS. N-linked (GlcNAc...) asparagine glycosylation is found at Asn-139, Asn-169, and Asn-251. 426–428 lines the substrate pocket; it reads HLR. Residues Asn-464, Asn-546, and Asn-607 are each glycosylated (N-linked (GlcNAc...) asparagine).

The protein belongs to the glycosyltransferase GT106 family.

It is found in the membrane. It functions in the pathway glycan metabolism. In Arabidopsis thaliana (Mouse-ear cress), this protein is O-fucosyltransferase 15.